The sequence spans 57 residues: Large ribosomal subunit protein bL32 (57 aa).

Residues 1–23 (MAVPARHTSSAKKNRRRTHYKLT) are disordered. Residues 9–20 (SSAKKNRRRTHY) are compositionally biased toward basic residues.

Belongs to the bacterial ribosomal protein bL32 family.

This is Large ribosomal subunit protein bL32 from Lactococcus lactis subsp. cremoris (strain MG1363).